Reading from the N-terminus, the 161-residue chain is MSGDGSPEIEVDGSGLRVAVVAARWHAETMDGLLAGARRALEASGVTEVTEVRVPGAFELPVAAARLARAGHDAVVALGVVIRGGTPHFDYVCDAATQGLTQVAVTTGVPIGFGVLTVDNEAQALHRAGLRGSREDKGAEAVLAALETVVALRGVAPLPQG.

Residues Trp-25, 57–59, and 80–82 contribute to the 5-amino-6-(D-ribitylamino)uracil site; these read AFE and VVI. 85-86 serves as a coordination point for (2S)-2-hydroxy-3-oxobutyl phosphate; that stretch reads GT. The active-site Proton donor is the His-88. Residue Phe-113 participates in 5-amino-6-(D-ribitylamino)uracil binding. Arg-127 serves as a coordination point for (2S)-2-hydroxy-3-oxobutyl phosphate.

The protein belongs to the DMRL synthase family.

It carries out the reaction (2S)-2-hydroxy-3-oxobutyl phosphate + 5-amino-6-(D-ribitylamino)uracil = 6,7-dimethyl-8-(1-D-ribityl)lumazine + phosphate + 2 H2O + H(+). It functions in the pathway cofactor biosynthesis; riboflavin biosynthesis; riboflavin from 2-hydroxy-3-oxobutyl phosphate and 5-amino-6-(D-ribitylamino)uracil: step 1/2. Catalyzes the formation of 6,7-dimethyl-8-ribityllumazine by condensation of 5-amino-6-(D-ribitylamino)uracil with 3,4-dihydroxy-2-butanone 4-phosphate. This is the penultimate step in the biosynthesis of riboflavin. The protein is 6,7-dimethyl-8-ribityllumazine synthase of Kineococcus radiotolerans (strain ATCC BAA-149 / DSM 14245 / SRS30216).